A 343-amino-acid polypeptide reads, in one-letter code: L-threonine 3-dehydrogenase (343 aa).

Cys40 provides a ligand contact to Zn(2+). Catalysis depends on charge relay system residues Thr42 and His45. Zn(2+) contacts are provided by His65, Glu66, Cys95, Cys98, Cys101, and Cys109. Residues Ile177, Asp197, Arg202, 264–266 (LGI), and 288–289 (IY) contribute to the NAD(+) site.

It belongs to the zinc-containing alcohol dehydrogenase family. As to quaternary structure, homotetramer. The cofactor is Zn(2+).

The protein resides in the cytoplasm. It carries out the reaction L-threonine + NAD(+) = (2S)-2-amino-3-oxobutanoate + NADH + H(+). It functions in the pathway amino-acid degradation; L-threonine degradation via oxydo-reductase pathway; glycine from L-threonine: step 1/2. Catalyzes the NAD(+)-dependent oxidation of L-threonine to 2-amino-3-ketobutyrate. The polypeptide is L-threonine 3-dehydrogenase (Vibrio vulnificus (strain YJ016)).